The following is a 282-amino-acid chain: Pantothenate synthetase (282 aa).

Position 30-37 (30-37 (MGYLHEGH)) interacts with ATP. H37 serves as the catalytic Proton donor. Q61 contributes to the (R)-pantoate binding site. Beta-alanine is bound at residue Q61. 147-150 (GMKD) serves as a coordination point for ATP. Q153 lines the (R)-pantoate pocket. ATP-binding positions include V176 and 184 to 187 (KSSR).

It belongs to the pantothenate synthetase family. Homodimer.

The protein localises to the cytoplasm. It carries out the reaction (R)-pantoate + beta-alanine + ATP = (R)-pantothenate + AMP + diphosphate + H(+). The protein operates within cofactor biosynthesis; (R)-pantothenate biosynthesis; (R)-pantothenate from (R)-pantoate and beta-alanine: step 1/1. Functionally, catalyzes the condensation of pantoate with beta-alanine in an ATP-dependent reaction via a pantoyl-adenylate intermediate. The sequence is that of Pantothenate synthetase from Bacillus thuringiensis subsp. konkukian (strain 97-27).